Reading from the N-terminus, the 186-residue chain is NADH-dependent FMN reductase SfnE (186 aa).

Belongs to the SsuE family.

It catalyses the reaction FMNH2 + NAD(+) = FMN + NADH + 2 H(+). Involved in the dimethyl sulfide degradation pathway. Catalyzes the NADH-dependent reduction of FMN. This chain is NADH-dependent FMN reductase SfnE, found in Pseudomonas putida (Arthrobacter siderocapsulatus).